A 317-amino-acid polypeptide reads, in one-letter code: UV DNA damage endonuclease (317 aa).

This sequence belongs to the uve1/UvsE family.

Its function is as follows. Component in a DNA repair pathway. Removal of UV LIGHT damaged nucleotides. Recognizes pyrimidine dimers and cleave a phosphodiester bond immediately 5' to the lesion. The chain is UV DNA damage endonuclease from Bacillus mycoides (strain KBAB4) (Bacillus weihenstephanensis).